A 915-amino-acid polypeptide reads, in one-letter code: Kinesin-like protein KIN-10A (915 aa).

Pro residues predominate over residues Met-1–Pro-16. 2 disordered regions span residues Met-1–Ala-28 and His-34–Thr-53. Positions Pro-56–Ile-391 constitute a Kinesin motor domain. ATP is bound at residue Gly-137–Ser-144. A coiled-coil region spans residues Asn-426–Lys-517. A disordered region spans residues Pro-676 to Ala-718.

The protein belongs to the TRAFAC class myosin-kinesin ATPase superfamily. Kinesin family. KIN-10 subfamily.

This is Kinesin-like protein KIN-10A from Oryza sativa subsp. japonica (Rice).